The following is a 430-amino-acid chain: Serine hydroxymethyltransferase (430 aa).

120–122 (GHI) lines the (6S)-5,6,7,8-tetrahydrofolate pocket. An N6-(pyridoxal phosphate)lysine modification is found at Lys-226.

It belongs to the SHMT family. As to quaternary structure, homodimer. Pyridoxal 5'-phosphate serves as cofactor.

It localises to the cytoplasm. It functions in the pathway amino-acid biosynthesis; glycine biosynthesis; glycine from L-serine: step 1/1. Catalyzes the reversible interconversion of serine and glycine with a modified folate serving as the one-carbon carrier. Also exhibits a pteridine-independent aldolase activity toward beta-hydroxyamino acids, producing glycine and aldehydes, via a retro-aldol mechanism. The chain is Serine hydroxymethyltransferase from Pyrobaculum islandicum (strain DSM 4184 / JCM 9189 / GEO3).